The chain runs to 314 residues: MAEISAKLVQELRQKTGAGMMDCKKALIETEGNVEEAADWLRKKGISKAGAKSDRVAAEGLVDTYIQPGGQVGVLIEVNCQTDFVARNEAFKALVKNLAKQAAAADSVESLLAQQYADSPGGTVEEFIKQTIATLGENIQVRRFVNFALAEGTQGVVDSYIHTGGRVGVLVELGSQSESVATNQEFQSLARNTAMQVAACPNVEYVSVDQIPAEVAQKEKDIEMGKDDLANKPENIKEKIVQGRIEKRLKELTLIDQPYIRDQSISVEDLFKQAKTKLGEEIQVTRFVRYILGEGIEKQEISFADEVAAQMGGK.

The segment at 82-85 is involved in Mg(2+) ion dislocation from EF-Tu; the sequence is TDFV.

It belongs to the EF-Ts family.

It is found in the cytoplasm. Its function is as follows. Associates with the EF-Tu.GDP complex and induces the exchange of GDP to GTP. It remains bound to the aminoacyl-tRNA.EF-Tu.GTP complex up to the GTP hydrolysis stage on the ribosome. In Nostoc punctiforme (strain ATCC 29133 / PCC 73102), this protein is Elongation factor Ts.